A 1442-amino-acid chain; its full sequence is Death-associated protein kinase 1 (1442 aa).

The region spanning Tyr13–Ile275 is the Protein kinase domain. Residues Leu19 to Val27 and Lys42 each bind ATP. Residue Asp139 is the Proton acceptor of the active site. Residues Gln267–Asp334 are calmodulin-binding. Ser289 carries the post-translational modification Phosphoserine; by RPS6KA1 and RPS6KA3. Positions Asn292 to Ala301 are autoinhibitory domain. At Ser308 the chain carries Phosphoserine; by autocatalysis. Ser319 and Ser333 each carry phosphoserine. 8 ANK repeats span residues His378 to Val407, Gly411 to Val440, Ser444 to Phe473, Glu477 to Ile506, Glu510 to Ala539, Asp543 to Phe572, His576 to Ile605, and Tyr609 to Ala638. The region spanning Thr681–Ile955 is the Roc domain. Ser734 is subject to Phosphoserine; by MAPK1. The stretch at Lys875–Tyr904 is one ANK 9 repeat. Ser1115 is modified (phosphoserine). Residues Asp1164 to Val1196 form an ANK 10 repeat. One can recognise a Death domain in the interval Lys1312–Ser1396. Ser1433 is modified (phosphoserine).

The protein belongs to the protein kinase superfamily. CAMK Ser/Thr protein kinase family. DAP kinase subfamily. As to quaternary structure, interacts with KLHL20. Interacts (via death domain) with MAPK1 and MAPK3. Interacts with MAP1B (via N-terminus). Interacts with PRKD1 in an oxidative stress-regulated manner. Interacts with PIN1, PDCD6, BECN1, TSC2 and STX1A. Interacts (via kinase domain) with DAPK3 (via kinase domain). Interacts with GRINB. Interacts (via death domain) with UNC5B (via death domain). Interacts with UNC5C (via death domain). It depends on Mg(2+) as a cofactor. Ubiquitinated by the BCR(KLHL20) E3 ubiquitin ligase complex, leading to its degradation by the proteasome. In terms of processing, in response to mitogenic stimulation (PMA or EGF), phosphorylated at Ser-289; phosphorylation suppresses DAPK1 pro-apoptotic function. Autophosphorylation at Ser-308 inhibits its catalytic activity. Phosphorylation at Ser-734 by MAPK1 increases its catalytic activity and promotes cytoplasmic retention of MAPK1. Endoplasmic-stress can cause dephosphorylation at Ser-308. High levels in bladder, uterus, vas deferens, lung, liver and kidney.

It catalyses the reaction L-seryl-[protein] + ATP = O-phospho-L-seryl-[protein] + ADP + H(+). The enzyme catalyses L-threonyl-[protein] + ATP = O-phospho-L-threonyl-[protein] + ADP + H(+). Activated by Ca(2+)/calmodulin. Regulated by a locking mechanism, involving autophosphorylation at Ser-308 and calmodulin binding. In the inactive state, Ser-308 is phosphorylated. Activation involves its dephosphorylation and a release-of-autoinhibition mechanism where binding of calmodulin induces a conformational change that relieves the steric block of the active site by the autoinhibitory domain. Activity is modulated by UNC5B and NTN1. UNC5B activates it by inhibiting the phosphorylation at Ser-308, whereas NTN1 inhibits UNC5B-mediated activation of DAPK1. Endoplasmic-stress activates by causing Ser-308 dephosphorylation. Functionally, calcium/calmodulin-dependent serine/threonine kinase involved in multiple cellular signaling pathways that trigger cell survival, apoptosis, and autophagy. Regulates both type I apoptotic and type II autophagic cell deaths signal, depending on the cellular setting. The former is caspase-dependent, while the latter is caspase-independent and is characterized by the accumulation of autophagic vesicles. Phosphorylates PIN1 resulting in inhibition of its catalytic activity, nuclear localization, and cellular function. Phosphorylates TPM1, enhancing stress fiber formation in endothelial cells. Phosphorylates STX1A and significantly decreases its binding to STXBP1. Phosphorylates PRKD1 and regulates JNK signaling by binding and activating PRKD1 under oxidative stress. Phosphorylates BECN1, reducing its interaction with BCL2 and BCL2L1 and promoting the induction of autophagy. Phosphorylates TSC2, disrupting the TSC1-TSC2 complex and stimulating mTORC1 activity in a growth factor-dependent pathway. Phosphorylates RPS6, MYL9 and DAPK3. Acts as a signaling amplifier of NMDA receptors at extrasynaptic sites for mediating brain damage in stroke. Cerebral ischemia recruits DAPK1 into the NMDA receptor complex and it phosphorylates GRINB at Ser-1303 inducing injurious Ca(2+) influx through NMDA receptor channels, resulting in an irreversible neuronal death. Required together with DAPK3 for phosphorylation of RPL13A upon interferon-gamma activation which is causing RPL13A involvement in transcript-selective translation inhibition. This is Death-associated protein kinase 1 (Dapk1) from Mus musculus (Mouse).